Consider the following 229-residue polypeptide: Peptidyl-tRNA hydrolase (229 aa).

Tyr-17 is a tRNA binding site. The active-site Proton acceptor is the His-22. 3 residues coordinate tRNA: Phe-74, Asn-76, and Asn-122. The segment at Ala-194–Thr-229 is disordered. The span at Thr-207–Pro-223 shows a compositional bias: low complexity.

It belongs to the PTH family. Monomer.

Its subcellular location is the cytoplasm. The catalysed reaction is an N-acyl-L-alpha-aminoacyl-tRNA + H2O = an N-acyl-L-amino acid + a tRNA + H(+). In terms of biological role, hydrolyzes ribosome-free peptidyl-tRNAs (with 1 or more amino acids incorporated), which drop off the ribosome during protein synthesis, or as a result of ribosome stalling. Its function is as follows. Catalyzes the release of premature peptidyl moieties from peptidyl-tRNA molecules trapped in stalled 50S ribosomal subunits, and thus maintains levels of free tRNAs and 50S ribosomes. The sequence is that of Peptidyl-tRNA hydrolase from Desulfovibrio desulfuricans (strain ATCC 27774 / DSM 6949 / MB).